Here is a 949-residue protein sequence, read N- to C-terminus: uncharacterized protein (949 aa).

The region spanning 64 to 170 is the Calponin-homology (CH) domain; it reads LCSVHEAKKW…YCLHALSYLL (107 aa).

It localises to the nucleus. This is an uncharacterized protein from Schizosaccharomyces pombe (strain 972 / ATCC 24843) (Fission yeast).